The sequence spans 278 residues: MSISPQEVKKLRDATGAGFGDCKKALSVAGGDFELAKKKLKEMGIVSADKRSGRDAKEGRVFSYVNTERVGLLLIACETDFVAMNSDFVAFGNSLIKQLVESGRDILDEHQELEIKNLAATIKENIYVSKVYISNIASNELVKNYLHGDHSKIGVFVKFKIDDALKMQDEKLNNFAMDLALHVAAFSPLYLSVNDICLNYIKEQEEIFMRQMESSGKPENVVKGIISGKLKKHLGEIALLEQGFVKDDKLTVKEKIEEVSKLILSKIEVVEFKYLSVG.

The segment at 79–82 (TDFV) is involved in Mg(2+) ion dislocation from EF-Tu.

This sequence belongs to the EF-Ts family.

Its subcellular location is the cytoplasm. Functionally, associates with the EF-Tu.GDP complex and induces the exchange of GDP to GTP. It remains bound to the aminoacyl-tRNA.EF-Tu.GTP complex up to the GTP hydrolysis stage on the ribosome. This is Elongation factor Ts from Borrelia recurrentis (strain A1).